The chain runs to 910 residues: Protein translocase subunit SecA (910 aa).

ATP-binding positions include glutamine 89, 107–111, and aspartate 496; that span reads GEGKT. The interval 873–910 is disordered; sequence QEFSGGNLNRSQSNGSSVTVTTSSGGGTERKTSRRRKR. The segment covering 876–886 has biased composition (polar residues); it reads SGGNLNRSQSN.

It belongs to the SecA family. Monomer and homodimer. Part of the essential Sec protein translocation apparatus which comprises SecA, SecYEG and auxiliary proteins SecDF. Other proteins may also be involved.

It localises to the cell inner membrane. The protein resides in the cytoplasm. It carries out the reaction ATP + H2O + cellular proteinSide 1 = ADP + phosphate + cellular proteinSide 2.. Its function is as follows. Part of the Sec protein translocase complex. Interacts with the SecYEG preprotein conducting channel. Has a central role in coupling the hydrolysis of ATP to the transfer of proteins into and across the cell membrane, serving as an ATP-driven molecular motor driving the stepwise translocation of polypeptide chains across the membrane. The polypeptide is Protein translocase subunit SecA (Leptospira interrogans serogroup Icterohaemorrhagiae serovar copenhageni (strain Fiocruz L1-130)).